A 426-amino-acid chain; its full sequence is Probable M18 family aminopeptidase 2 (426 aa).

The Zn(2+) site is built by histidine 79, histidine 156, and histidine 399.

Belongs to the peptidase M18 family. Zn(2+) serves as cofactor.

The protein is Probable M18 family aminopeptidase 2 (apeB) of Mycobacterium leprae (strain TN).